The chain runs to 332 residues: Glycerol-3-phosphate dehydrogenase [NAD(P)+] (332 aa).

Residues tryptophan 11, arginine 30, and lysine 108 each coordinate NADPH. 3 residues coordinate sn-glycerol 3-phosphate: lysine 108, glycine 137, and serine 139. Alanine 141 provides a ligand contact to NADPH. 5 residues coordinate sn-glycerol 3-phosphate: lysine 192, aspartate 245, serine 255, arginine 256, and asparagine 257. Lysine 192 acts as the Proton acceptor in catalysis. Residue arginine 256 participates in NADPH binding. 2 residues coordinate NADPH: valine 280 and glutamate 282.

This sequence belongs to the NAD-dependent glycerol-3-phosphate dehydrogenase family.

It is found in the cytoplasm. It carries out the reaction sn-glycerol 3-phosphate + NAD(+) = dihydroxyacetone phosphate + NADH + H(+). It catalyses the reaction sn-glycerol 3-phosphate + NADP(+) = dihydroxyacetone phosphate + NADPH + H(+). It participates in membrane lipid metabolism; glycerophospholipid metabolism. In terms of biological role, catalyzes the reduction of the glycolytic intermediate dihydroxyacetone phosphate (DHAP) to sn-glycerol 3-phosphate (G3P), the key precursor for phospholipid synthesis. In Burkholderia thailandensis (strain ATCC 700388 / DSM 13276 / CCUG 48851 / CIP 106301 / E264), this protein is Glycerol-3-phosphate dehydrogenase [NAD(P)+].